The primary structure comprises 295 residues: UDP-N-acetylenolpyruvoylglucosamine reductase (295 aa).

The FAD-binding PCMH-type domain maps to 24-188 (KVGGNAEIFF…LKAIFKANKG (165 aa)). Residue R168 is part of the active site. S217 (proton donor) is an active-site residue. E287 is a catalytic residue.

The protein belongs to the MurB family. The cofactor is FAD.

It localises to the cytoplasm. It catalyses the reaction UDP-N-acetyl-alpha-D-muramate + NADP(+) = UDP-N-acetyl-3-O-(1-carboxyvinyl)-alpha-D-glucosamine + NADPH + H(+). It participates in cell wall biogenesis; peptidoglycan biosynthesis. Functionally, cell wall formation. In Rickettsia typhi (strain ATCC VR-144 / Wilmington), this protein is UDP-N-acetylenolpyruvoylglucosamine reductase.